The chain runs to 249 residues: MGNKINPNGFRLGVTKGWNSRWYAGKKQYASLLKEDEQIRQLINKKLAAAGIARIEIERAGQQVNVIISAAKPGVVIGKGGESIKELRGDIERLVSAGTVAVNVAEIPNPNISAPLVALRIAEQIERRFAFRRAMKQAAQRVMESGARGVKVILSGRLGGAEQARTEKVLEGRVPLHTLRADIDYGTALARTTYGILGIKVLVFNGEVIGGKTETFARPQRRDRDERRPEGGDRPARRRPTARRRTGGE.

The KH type-2 domain maps to 39-108 (IRQLINKKLA…TVAVNVAEIP (70 aa)). Positions 214–249 (ETFARPQRRDRDERRPEGGDRPARRRPTARRRTGGE) are disordered. Residues 220–235 (QRRDRDERRPEGGDRP) show a composition bias toward basic and acidic residues. Residues 236-249 (ARRRPTARRRTGGE) show a composition bias toward basic residues.

The protein belongs to the universal ribosomal protein uS3 family. As to quaternary structure, part of the 30S ribosomal subunit. Forms a tight complex with proteins S10 and S14.

Binds the lower part of the 30S subunit head. Binds mRNA in the 70S ribosome, positioning it for translation. The chain is Small ribosomal subunit protein uS3 from Deinococcus radiodurans (strain ATCC 13939 / DSM 20539 / JCM 16871 / CCUG 27074 / LMG 4051 / NBRC 15346 / NCIMB 9279 / VKM B-1422 / R1).